A 219-amino-acid chain; its full sequence is Endonuclease III (219 aa).

The HhH domain maps to 109–128; it reads RDELVKLPGVGRKTANVVVS. [4Fe-4S] cluster is bound by residues cysteine 189, cysteine 196, cysteine 199, and cysteine 205.

Belongs to the Nth/MutY family. The cofactor is [4Fe-4S] cluster.

The enzyme catalyses 2'-deoxyribonucleotide-(2'-deoxyribose 5'-phosphate)-2'-deoxyribonucleotide-DNA = a 3'-end 2'-deoxyribonucleotide-(2,3-dehydro-2,3-deoxyribose 5'-phosphate)-DNA + a 5'-end 5'-phospho-2'-deoxyribonucleoside-DNA + H(+). DNA repair enzyme that has both DNA N-glycosylase activity and AP-lyase activity. The DNA N-glycosylase activity releases various damaged pyrimidines from DNA by cleaving the N-glycosidic bond, leaving an AP (apurinic/apyrimidinic) site. The AP-lyase activity cleaves the phosphodiester bond 3' to the AP site by a beta-elimination, leaving a 3'-terminal unsaturated sugar and a product with a terminal 5'-phosphate. In Bacillus subtilis (strain 168), this protein is Endonuclease III.